The following is a 248-amino-acid chain: Ubiquinone biosynthesis O-methyltransferase (248 aa).

The S-adenosyl-L-methionine site is built by arginine 41, glycine 72, aspartate 93, and methionine 136.

The protein belongs to the methyltransferase superfamily. UbiG/COQ3 family.

The catalysed reaction is a 3-demethylubiquinol + S-adenosyl-L-methionine = a ubiquinol + S-adenosyl-L-homocysteine + H(+). It catalyses the reaction a 3-(all-trans-polyprenyl)benzene-1,2-diol + S-adenosyl-L-methionine = a 2-methoxy-6-(all-trans-polyprenyl)phenol + S-adenosyl-L-homocysteine + H(+). The protein operates within cofactor biosynthesis; ubiquinone biosynthesis. Functionally, O-methyltransferase that catalyzes the 2 O-methylation steps in the ubiquinone biosynthetic pathway. This is Ubiquinone biosynthesis O-methyltransferase from Rhizobium etli (strain ATCC 51251 / DSM 11541 / JCM 21823 / NBRC 15573 / CFN 42).